Consider the following 31-residue polypeptide: ALWKDVLKKIGTVALHAGKAALGAVADTISQ.

Gln31 carries the post-translational modification Glutamine amide.

As to expression, expressed by the skin glands.

It is found in the secreted. Its function is as follows. Has antimicrobial activity. This chain is Dermaseptin-7.1TR, found in Phyllomedusa trinitatis (Trinidad leaf frog).